The chain runs to 277 residues: Small ribosomal subunit protein uS3 (277 aa).

Residues 43–111 form the KH type-2 domain; the sequence is IRELMSKGMD…QIQLNILEVK (69 aa). Residues 217–277 form a disordered region; it reads AAQQAAAPSS…AEANNAEGGK (61 aa). A compositionally biased stretch (basic and acidic residues) spans 245 to 258; the sequence is NDRNDRGGRRERDS. Positions 259–277 are enriched in low complexity; the sequence is AAAPQQNSAAEANNAEGGK.

It belongs to the universal ribosomal protein uS3 family. As to quaternary structure, part of the 30S ribosomal subunit. Forms a tight complex with proteins S10 and S14.

In terms of biological role, binds the lower part of the 30S subunit head. Binds mRNA in the 70S ribosome, positioning it for translation. In Kocuria rhizophila (strain ATCC 9341 / DSM 348 / NBRC 103217 / DC2201), this protein is Small ribosomal subunit protein uS3.